We begin with the raw amino-acid sequence, 311 residues long: CAAX prenyl protease 2 (311 aa).

3 helical membrane-spanning segments follow: residues 14–34 (VATC…PTVI), 51–71 (FICA…ILPI), and 94–114 (VVYP…LKLF). E164 acts as the Proton donor/acceptor in catalysis. A helical transmembrane segment spans residues 173–193 (IPLLLCAGFRINTAIFLCPVL). H198 serves as the catalytic Proton donor/acceptor. A run of 3 helical transmembrane segments spans residues 219–239 (IVGL…FLFI), 244–264 (LAAP…VLYA), and 268–288 (GLVS…LFPL).

The protein belongs to the peptidase U48 family. As to expression, expressed in seeds, stems, leaves, flowers and siliques.

It localises to the endoplasmic reticulum membrane. It catalyses the reaction Hydrolyzes the peptide bond -P2-(S-farnesyl or geranylgeranyl)C-P1'-P2'-P3'-COOH where P1' and P2' are amino acids with aliphatic sidechains and P3' is any C-terminal residue.. Inhibited in vitro by L-1-tosylamido-2-phenylethyl chloromethyl ketone (TPCK) and N-ethylmaleimide, but not by EDTA. In terms of biological role, protease involved in the processing of a variety of prenylated proteins containing the C-terminal CAAX motif, where C is a cysteine modified with an isoprenoid lipid, A is an aliphatic amino acid and X is any C-terminal amino acid. Proteolytically removes the C-terminal three residues of farnesylated and geranylated proteins, leaving the prenylated cysteine as the new C-terminus. The substrate specificity is only partially overlapping with that of FACE1. CAAX processing is likely required for subcellular targeting of prenylated proteins to the plasma membrane. In Arabidopsis thaliana (Mouse-ear cress), this protein is CAAX prenyl protease 2 (FACE2).